Consider the following 200-residue polypeptide: 3-isopropylmalate dehydratase small subunit (200 aa).

This sequence belongs to the LeuD family. LeuD type 1 subfamily. In terms of assembly, heterodimer of LeuC and LeuD.

The catalysed reaction is (2R,3S)-3-isopropylmalate = (2S)-2-isopropylmalate. Its pathway is amino-acid biosynthesis; L-leucine biosynthesis; L-leucine from 3-methyl-2-oxobutanoate: step 2/4. In terms of biological role, catalyzes the isomerization between 2-isopropylmalate and 3-isopropylmalate, via the formation of 2-isopropylmaleate. This chain is 3-isopropylmalate dehydratase small subunit, found in Edwardsiella ictaluri (strain 93-146).